The primary structure comprises 426 residues: Enolase 1 (426 aa).

Gln-162 serves as a coordination point for (2R)-2-phosphoglycerate. Glu-204 functions as the Proton donor in the catalytic mechanism. The Mg(2+) site is built by Asp-241, Glu-284, and Asp-311. The (2R)-2-phosphoglycerate site is built by Lys-336, Arg-365, Ser-366, and Lys-387. Lys-336 (proton acceptor) is an active-site residue.

The protein belongs to the enolase family. The cofactor is Mg(2+).

It is found in the cytoplasm. Its subcellular location is the secreted. The protein resides in the cell surface. It catalyses the reaction (2R)-2-phosphoglycerate = phosphoenolpyruvate + H2O. It participates in carbohydrate degradation; glycolysis; pyruvate from D-glyceraldehyde 3-phosphate: step 4/5. Functionally, catalyzes the reversible conversion of 2-phosphoglycerate (2-PG) into phosphoenolpyruvate (PEP). It is essential for the degradation of carbohydrates via glycolysis. This chain is Enolase 1, found in Methanospirillum hungatei JF-1 (strain ATCC 27890 / DSM 864 / NBRC 100397 / JF-1).